Consider the following 192-residue polypeptide: uncharacterized protein (192 aa).

Residues 53-111 (CLKESVERARKVYLSLLKDYERKSREYEKAYENYLKELRTYRETLYRIKEDLKFYERIC) adopt a coiled-coil conformation.

This is an uncharacterized protein from Aquifex aeolicus (strain VF5).